The sequence spans 132 residues: Bleomycin resistance protein (132 aa).

The region spanning 1–129 (MLQSIPALPV…DNNLISFFQQ (129 aa)) is the VOC domain.

It belongs to the bleomycin resistance protein family.

In terms of biological role, binding protein with a strong affinity to the bleomycin family of antibiotics. This chain is Bleomycin resistance protein (bleO), found in Geobacillus stearothermophilus (Bacillus stearothermophilus).